The chain runs to 894 residues: Kinesin-like protein KIN-UB (894 aa).

A disordered region spans residues 1–53 (MAMASSRNGAVRGSMRPVSGANSSNLRSSSFKSRIPSSAPAPRRSSSASIGAA). Residues 19–50 (SGANSSNLRSSSFKSRIPSSAPAPRRSSSASI) are compositionally biased toward low complexity. A Kinesin motor domain is found at 60-402 (RVRVAVRLRP…ILFGQRAMKV (343 aa)). 145–152 (GQTGTGKT) is a binding site for ATP. The D-BOX motif lies at 372–380 (RTSLIVTIG). Residues 423-588 (VQLDKVIAEN…RSQLVQLTFE (166 aa)) are a coiled coil. Disordered regions lie at residues 530–550 (EEEV…GEGE) and 598–623 (RGAP…ESVN). A compositionally biased stretch (polar residues) spans 603–623 (NSYSGTDSLPSRHSQARESVN). 4 ARM repeats span residues 626 to 665 (KAPF…NLAA), 667 to 707 (EANQ…NLAM), 709 to 749 (EVSQ…NLCG), and 751 to 790 (DKLQ…NFAK).

Belongs to the TRAFAC class myosin-kinesin ATPase superfamily. Kinesin family. Ungrouped subfamily. As to quaternary structure, interacts (via C-terminus) with NEK5. In terms of tissue distribution, expressed in the basal regions and petioles of immature leaves and in the root elongation zone.

The protein resides in the cytoplasm. The protein localises to the cytoskeleton. In terms of biological role, involved in the control of epidermal-cell morphogenesis in roots and helical growth of roots by promoting microtubule depolymerization and limiting the accumulation of endoplasmic microtubules. Seems to be involved in the control of cell-file rotation (or twisting). The sequence is that of Kinesin-like protein KIN-UB from Arabidopsis thaliana (Mouse-ear cress).